The chain runs to 281 residues: Proteasome subunit beta (281 aa).

Residues 1–53 constitute a propeptide, removed in mature form; by autocatalysis; it reads MEANTRSTGRLPAAFLTPGSSSFMDFLSDQSPEMLPGNRSLPPLQGAVEAPHG. T54 acts as the Nucleophile in catalysis.

The protein belongs to the peptidase T1B family. In terms of assembly, the 20S proteasome core is composed of 14 alpha and 14 beta subunits that assemble into four stacked heptameric rings, resulting in a barrel-shaped structure. The two inner rings, each composed of seven catalytic beta subunits, are sandwiched by two outer rings, each composed of seven alpha subunits. The catalytic chamber with the active sites is on the inside of the barrel. Has a gated structure, the ends of the cylinder being occluded by the N-termini of the alpha-subunits. Is capped by the proteasome-associated ATPase, ARC.

Its subcellular location is the cytoplasm. It catalyses the reaction Cleavage of peptide bonds with very broad specificity.. Its pathway is protein degradation; proteasomal Pup-dependent pathway. Its activity is regulated as follows. The formation of the proteasomal ATPase ARC-20S proteasome complex, likely via the docking of the C-termini of ARC into the intersubunit pockets in the alpha-rings, may trigger opening of the gate for substrate entry. Interconversion between the open-gate and close-gate conformations leads to a dynamic regulation of the 20S proteasome proteolysis activity. Functionally, component of the proteasome core, a large protease complex with broad specificity involved in protein degradation. This Streptomyces griseus subsp. griseus (strain JCM 4626 / CBS 651.72 / NBRC 13350 / KCC S-0626 / ISP 5235) protein is Proteasome subunit beta.